A 1246-amino-acid polypeptide reads, in one-letter code: HMG2-induced ER-remodeling protein 1 (1246 aa).

Disordered stretches follow at residues 19 to 241, 263 to 288, and 816 to 836; these read KGKR…GSLT, HHIQ…LPPI, and MPDA…KDEK. A compositionally biased stretch (low complexity) spans 27–41; sequence KSAASTRTSEATTTS. Positions 58–95 are enriched in polar residues; that stretch reads TIASPQRPLSGQNVNNELSNSKPAVSAEKVSQQGQVPT. Phosphoserine is present on Ser-102. Thr-128 bears the Phosphothreonine mark. Composition is skewed to low complexity over residues 154–163 and 211–230; these read RSSSISTSLN and SKIS…PSSS. The span at 271–282 shows a compositional bias: basic and acidic residues; sequence SGREQDSPHSES. Ser-277 is modified (phosphoserine). The residue at position 1013 (Ser-1013) is a Phosphoserine. Composition is skewed to polar residues over residues 1109–1133 and 1200–1215; these read SSRH…TPDS and SRSP…QQKA. 2 disordered regions span residues 1109 to 1157 and 1192 to 1224; these read SSRH…LPKI and SLYG…LVED. Thr-1130 bears the Phosphothreonine mark. Ser-1200, Ser-1204, and Ser-1207 each carry phosphoserine.

The protein belongs to the GIP3/HER1 family. May interact with ribosomes.

The protein resides in the cytoplasm. Required for HMG2-induced endoplasmic reticulum-remodeling. The polypeptide is HMG2-induced ER-remodeling protein 1 (HER1) (Saccharomyces cerevisiae (strain ATCC 204508 / S288c) (Baker's yeast)).